A 423-amino-acid polypeptide reads, in one-letter code: Glucose-1-phosphate adenylyltransferase 1 (423 aa).

Residues Y111, G176, 191-192 (EK), and S209 contribute to the alpha-D-glucose 1-phosphate site.

The protein belongs to the bacterial/plant glucose-1-phosphate adenylyltransferase family. Homotetramer.

It catalyses the reaction alpha-D-glucose 1-phosphate + ATP + H(+) = ADP-alpha-D-glucose + diphosphate. Its pathway is glycan biosynthesis; glycogen biosynthesis. In terms of biological role, involved in the biosynthesis of ADP-glucose, a building block required for the elongation reactions to produce glycogen. Catalyzes the reaction between ATP and alpha-D-glucose 1-phosphate (G1P) to produce pyrophosphate and ADP-Glc. This is Glucose-1-phosphate adenylyltransferase 1 from Alkalilimnicola ehrlichii (strain ATCC BAA-1101 / DSM 17681 / MLHE-1).